Reading from the N-terminus, the 479-residue chain is Sulfate adenylyltransferase subunit 1 (479 aa).

The 215-residue stretch at 25–239 folds into the tr-type G domain; that stretch reads KSLLRFLTCG…EVLETVDIQR (215 aa). A G1 region spans residues 34 to 41; that stretch reads GSVDDGKS. A GTP-binding site is contributed by 34–41; sequence GSVDDGKS. A G2 region spans residues 92–96; sequence GITID. Residues 113–116 are G3; the sequence is DTPG. GTP is bound by residues 113–117 and 168–171; these read DTPGH and NKMD. Positions 168 to 171 are G4; that stretch reads NKMD. Residues 206-208 are G5; it reads SAL.

Belongs to the TRAFAC class translation factor GTPase superfamily. Classic translation factor GTPase family. CysN/NodQ subfamily. As to quaternary structure, heterodimer composed of CysD, the smaller subunit, and CysN.

It catalyses the reaction sulfate + ATP + H(+) = adenosine 5'-phosphosulfate + diphosphate. Its pathway is sulfur metabolism; hydrogen sulfide biosynthesis; sulfite from sulfate: step 1/3. Its function is as follows. With CysD forms the ATP sulfurylase (ATPS) that catalyzes the adenylation of sulfate producing adenosine 5'-phosphosulfate (APS) and diphosphate, the first enzymatic step in sulfur assimilation pathway. APS synthesis involves the formation of a high-energy phosphoric-sulfuric acid anhydride bond driven by GTP hydrolysis by CysN coupled to ATP hydrolysis by CysD. This chain is Sulfate adenylyltransferase subunit 1, found in Salmonella paratyphi A (strain ATCC 9150 / SARB42).